The sequence spans 252 residues: Probable truncated L-gulonolactone oxidase 7, mitochondrial (252 aa).

The N-terminal 102 residues, 1–102 (MKRSMRSHLA…ELNYGVLVRY (102 aa)), are a transit peptide targeting the mitochondrion.

This sequence belongs to the oxygen-dependent FAD-linked oxidoreductase family.

The protein resides in the mitochondrion. The catalysed reaction is L-gulono-1,4-lactone + O2 = L-ascorbate + H2O2 + H(+). It participates in cofactor biosynthesis; L-ascorbate biosynthesis. May be involved in the biosynthesis of ascorbic acid. This is Probable truncated L-gulonolactone oxidase 7, mitochondrial from Arabidopsis thaliana (Mouse-ear cress).